A 199-amino-acid polypeptide reads, in one-letter code: MKIKNPRFVISAYDFDDFPTHNWPEFAFSGRSNVGKSSLINTLVNRRKLARTSSRPGRTQSINFFNIDDRFYLVDLPGYGFANVPRKVKEEWGRLIEGYLNNRPNLAGIVQIVDARHKPTRDDLMMVDWIKASGIPCLIAATKVDKISRGSRKKQEELIKKTLVLEDFDGQFTFFSAKTGEGKKQVGKFILDLVDSFKG.

The EngB-type G domain maps to 22 to 196 (NWPEFAFSGR…GKFILDLVDS (175 aa)). Residues 30 to 37 (GRSNVGKS), 57 to 61 (GRTQS), 75 to 78 (DLPG), 142 to 145 (TKVD), and 175 to 177 (FSA) contribute to the GTP site. Residues Ser37 and Thr59 each contribute to the Mg(2+) site.

The protein belongs to the TRAFAC class TrmE-Era-EngA-EngB-Septin-like GTPase superfamily. EngB GTPase family. Mg(2+) is required as a cofactor.

Necessary for normal cell division and for the maintenance of normal septation. The protein is Probable GTP-binding protein EngB of Halothermothrix orenii (strain H 168 / OCM 544 / DSM 9562).